We begin with the raw amino-acid sequence, 419 residues long: Zinc finger protein Pegasus (419 aa).

Residue lysine 5 forms a Glycyl lysine isopeptide (Lys-Gly) (interchain with G-Cter in SUMO2) linkage. 3 C2H2-type zinc fingers span residues 82–104 (LKCR…IRIH), 110–132 (HRCH…MRSH), and 138–161 (YKCE…RRKH). Lysine 185 is covalently cross-linked (Glycyl lysine isopeptide (Lys-Gly) (interchain with G-Cter in SUMO2)). Polar residues-rich tracts occupy residues 223–236 (QTDS…TTPT) and 262–273 (LSSLPPENQNPA). Disordered stretches follow at residues 223–247 (QTDS…QELM) and 262–356 (LSSL…PALP). A compositionally biased stretch (low complexity) spans 290 to 311 (QPSTQAVVSAVSASIPQSSSPT). The span at 332 to 349 (SEPSAHTSTPSIGNSQPS) shows a compositional bias: polar residues. C2H2-type zinc fingers lie at residues 364 to 386 (HHCQ…MGCH) and 392 to 416 (FQCN…RGQH).

The protein belongs to the Ikaros C2H2-type zinc-finger protein family. As to quaternary structure, self-associates. Interacts with other family members; IKZF1, IKZF2, IKZF3 and IKZF4. In terms of tissue distribution, expressed in brain, heart, skeletal muscle, kidney, and liver. Expressed in the hematopoietic cell lines MOLT-4, NALM-6 and K-562. Highly expressed in THP-1 and M-07e cell lines, which have characteristics of myeloid and early megakaryocytic cells respectively.

It is found in the nucleus. Transcriptional repressor that binds the core 5'GNNTGTNG-3' DNA consensus sequence. Involved in megakaryocyte differentiation. This Homo sapiens (Human) protein is Zinc finger protein Pegasus (IKZF5).